The sequence spans 1759 residues: Histone-lysine N-methyltransferase ASHH2 (1759 aa).

Composition is skewed to basic and acidic residues over residues 154-165, 197-206, and 215-224; these read QEKEAPQAKEDE, ETTKHIKPDE, and RFDDGGKEGR. 5 disordered regions span residues 154 to 181, 197 to 237, 437 to 482, 515 to 556, and 738 to 816; these read QEKE…GIDT, ETTK…GSSD, CEAG…IESI, SNNI…NRNI, and DELR…VGRI. The span at 462-472 shows a compositional bias: basic residues; the sequence is SARHLRKSSRK. Residues 530 to 556 are compositionally biased toward polar residues; it reads RSQGNLNNGEHNRSSHNGNVEGSNRNI. Basic residues predominate over residues 758 to 775; it reads KKAKHPKSKSNGTKKGKS. Composition is skewed to basic and acidic residues over residues 776-797 and 804-816; these read KFSE…EQRK and GRDD…VGRI. A CW-type zinc finger spans residues 859 to 912; it reads YSTESAWVRCDDCFKWRRIPASVVGSIDESSRWICMNNSDKRFADCSKSQEMSN. The Zn(2+) site is built by Cys-868, Cys-871, Cys-893, and Cys-904. In terms of domain architecture, AWS spans 974–1024; the sequence is DEIMVCHCKPSPDGRLGCGEECLNRMLNIECLQGTCPAGDLCSNQQFQKRK. The SET domain occupies 1026 to 1143; sequence VKFERFQSGK…KGQELTFDYN (118 aa). Residue Tyr-1142 participates in S-adenosyl-L-methionine binding. One can recognise a Post-SET domain in the interval 1151-1167; it reads AAKKCYCGSSHCRGYIG. Disordered stretches follow at residues 1225-1253, 1271-1345, 1496-1606, and 1727-1759; these read GYKD…PPPL, AVQQ…PGVN, ERSE…FSSP, and KQSV…KLNS. Polar residues predominate over residues 1232–1241; sequence DNTQTQSSVS. The segment covering 1284–1293 has biased composition (low complexity); that stretch reads STSPTSSSLS. Over residues 1304–1316 the composition is skewed to basic and acidic residues; it reads KTTKHGSGEDKKI. Basic residues predominate over residues 1317-1326; that stretch reads LPRPRPRMKT. Positions 1511–1521 are enriched in basic and acidic residues; the sequence is ASQEPRYDHQS. Positions 1530-1556 are enriched in polar residues; sequence SVTSSKAATPETASVSEGYSEPNSGLP. Positions 1566-1577 are enriched in basic and acidic residues; the sequence is RWDQPSKTKEQR. Over residues 1581 to 1594 the composition is skewed to polar residues; that stretch reads ILSQQTDETNGNQD.

It belongs to the class V-like SAM-binding methyltransferase superfamily. Histone-lysine methyltransferase family. SET2 subfamily. As to quaternary structure, interacts with FRI and SUF4, two components of the transcription activator complex FRI-C, and with SWC6, a component of the SWR1 chromatin-remodeling complex. Interacts with BZR2/BES1 and IWS1. Ubiquitous, with higher levels in young tissues, including shoot and root apex. Expressed in ovules, tapetum layer and microspores.

It is found in the nucleus. It localises to the chromosome. The protein localises to the centromere. It catalyses the reaction N(6)-methyl-L-lysyl(36)-[histone H3] + S-adenosyl-L-methionine = N(6),N(6)-dimethyl-L-lysyl(36)-[histone H3] + S-adenosyl-L-homocysteine + H(+). The catalysed reaction is N(6),N(6)-dimethyl-L-lysyl(36)-[histone H3] + S-adenosyl-L-methionine = N(6),N(6),N(6)-trimethyl-L-lysyl(36)-[histone H3] + S-adenosyl-L-homocysteine + H(+). In terms of biological role, histone methyltransferase involved in di and tri-methylation of 'Lys-36' of histone H3 (H3K36me2 and H3K36me3). Binds to H3 already mono- or di-methylated on 'Lys-4'(H3K4me1 or H3K4me2), but not to H3K4me3. H3K4me and H3K36me represent specific tags for epigenetic transcriptional activation. Positively regulates FLC transcription to prevent early flowering transition. Required for flowering transition in response to vernalization and for the maintenance of FLC expression in late embryos, but dispensable for the initial reactivation in early embryos during reprogramming. Also seems to modulate several traits including floral organ size, root size and dormancy. Promotes apical dominance. Directly involved in the tri-methylation of 'Lys-36' of histone H3 (H3K36me3) at LAZ5 chromatin to maintain a transcriptionally active state of LAZ5, a TIR-NB-LRR protein involved in innate immunity. Required for brassinosteroid (BR)-induced gene expression and histone H3 trimethylation on 'Lys-36' (H3K36me3) in BR-regulated genes. This Arabidopsis thaliana (Mouse-ear cress) protein is Histone-lysine N-methyltransferase ASHH2.